Consider the following 713-residue polypeptide: Polyribonucleotide nucleotidyltransferase (713 aa).

Mg(2+) is bound by residues aspartate 485 and aspartate 491. A KH domain is found at 552–611 (PRIYTMKIDPKKIKDVIGKGGATVRSLTEETGTSIDIDDDGTVKIAAVDKNAVQEVMSRI). The 69-residue stretch at 621–689 (GVVYKGKVTR…RQGRIRLTMK (69 aa)) folds into the S1 motif domain. The disordered stretch occupies residues 694–713 (DQTKNEENLLQSEEGSPVQE). Residues 701–713 (NLLQSEEGSPVQE) are compositionally biased toward polar residues.

The protein belongs to the polyribonucleotide nucleotidyltransferase family. Component of the RNA degradosome, which is a multiprotein complex involved in RNA processing and mRNA degradation. Mg(2+) is required as a cofactor.

It localises to the cytoplasm. It carries out the reaction RNA(n+1) + phosphate = RNA(n) + a ribonucleoside 5'-diphosphate. In terms of biological role, involved in mRNA degradation. Catalyzes the phosphorolysis of single-stranded polyribonucleotides processively in the 3'- to 5'-direction. This chain is Polyribonucleotide nucleotidyltransferase, found in Histophilus somni (strain 2336) (Haemophilus somnus).